Consider the following 1316-residue polypeptide: DNA-directed RNA polymerase subunit beta' (1316 aa).

The Zn(2+) site is built by cysteine 60, cysteine 62, cysteine 75, and cysteine 78. Residues aspartate 535, aspartate 537, and aspartate 539 each contribute to the Mg(2+) site. 4 residues coordinate Zn(2+): cysteine 891, cysteine 968, cysteine 975, and cysteine 978.

The protein belongs to the RNA polymerase beta' chain family. The RNAP catalytic core consists of 2 alpha, 1 beta, 1 beta' and 1 omega subunit. When a sigma factor is associated with the core the holoenzyme is formed, which can initiate transcription. Mg(2+) serves as cofactor. It depends on Zn(2+) as a cofactor.

The catalysed reaction is RNA(n) + a ribonucleoside 5'-triphosphate = RNA(n+1) + diphosphate. In terms of biological role, DNA-dependent RNA polymerase catalyzes the transcription of DNA into RNA using the four ribonucleoside triphosphates as substrates. In Mycobacterium tuberculosis (strain CDC 1551 / Oshkosh), this protein is DNA-directed RNA polymerase subunit beta'.